We begin with the raw amino-acid sequence, 174 residues long: Gamma-crystallin F (174 aa).

2 consecutive Beta/gamma crystallin 'Greek key' domains span residues 2-40 and 41-83; these read GKIT…RVDS and GCWM…HLIP. Positions 84–87 are connecting peptide; the sequence is HSSS. Beta/gamma crystallin 'Greek key' domains lie at 88-128 and 129-171; these read HRIR…HVIE and GYWV…RRIM.

It belongs to the beta/gamma-crystallin family.

Functionally, crystallins are the dominant structural components of the vertebrate eye lens. This chain is Gamma-crystallin F (Crygf), found in Rattus norvegicus (Rat).